A 185-amino-acid chain; its full sequence is Ribosome-recycling factor (185 aa).

This sequence belongs to the RRF family.

The protein localises to the cytoplasm. Its function is as follows. Responsible for the release of ribosomes from messenger RNA at the termination of protein biosynthesis. May increase the efficiency of translation by recycling ribosomes from one round of translation to another. This is Ribosome-recycling factor from Campylobacter jejuni subsp. doylei (strain ATCC BAA-1458 / RM4099 / 269.97).